The following is a 606-amino-acid chain: MKDSMSILTQTPSETPAAHSQLHHHLSHHHHPALHHHPVLQHHYSLQQQHQQQQQQQPPAPPAVATTTVVNMSGSTTTAANLKPNRSRFMINDILAGSAAAAFYKQQQQHHHHHHQSHHNNNNHSGGSSGGTSPTHHNNNNGEGFEPPSGGAGAGAGAAAPPPPLHHLHPQSHPHPHPHPHSHPHPHALVHPHAKLAAGGGAANGLNVAQYAAAMQQHYAAAAAAAAARNSAAAAAAAAAAAASAAAAGGGGGGGLGVGGAPAGAELDDSSDYHEENEDCDSDEGGSAGGGGGGSNHMDDHSVCSNGGKDDDGNSIKSGSTSDMSGLSKKQRKARTAFTDHQLQTLEKSFERQKYLSVQERQELAHKLDLSDCQVKTWYQNRRTKWMRQTAVGLELLAEAGNFAAFQRLYGGSPYLGAWPYAAAAGAGAAAAAAHGATPHTSIDIYYRQAAAAAAMQKPLPYNLYAGVPNVGVGVGVGVGPAPFSHLSASSSLSSLSSYYQSAAAAAAAANPGGPPPPPPPSSAAAATGGSPSPIGGLIKPLAGSPTGGMPPHHPSRPDSASPPLPLPLARPPSTPSPTLNPGSPPGRSVDSCSQAQSDDEDQIQV.

Polar residues predominate over residues 1–14; sequence MKDSMSILTQTPSE. Disordered stretches follow at residues 1–65, 104–188, 261–340, and 508–606; these read MKDS…PAVA, YKQQ…HPHA, APAG…AFTD, and AAAN…QIQV. Basic residues predominate over residues 21–40; it reads QLHHHLSHHHHPALHHHPVL. Positions 41–65 are enriched in low complexity; it reads QHHYSLQQQHQQQQQQQPPAPPAVA. Residues 108–118 show a composition bias toward basic residues; sequence QQHHHHHHQSH. Residues 119–138 are compositionally biased toward low complexity; sequence HNNNNHSGGSSGGTSPTHHN. Residues 166-188 show a composition bias toward basic residues; that stretch reads HHLHPQSHPHPHPHPHSHPHPHA. The segment covering 266–284 has biased composition (acidic residues); it reads ELDDSSDYHEENEDCDSDE. A compositionally biased stretch (gly residues) spans 286 to 295; that stretch reads GSAGGGGGGS. Residues 297 to 314 are compositionally biased toward basic and acidic residues; sequence HMDDHSVCSNGGKDDDGN. The segment covering 315-325 has biased composition (polar residues); that stretch reads SIKSGSTSDMS. Positions 331 to 390 form a DNA-binding region, homeobox; that stretch reads QRKARTAFTDHQLQTLEKSFERQKYLSVQERQELAHKLDLSDCQVKTWYQNRRTKWMRQT. A compositionally biased stretch (pro residues) spans 513–522; sequence GGPPPPPPPS. Positions 523–534 are enriched in low complexity; the sequence is SAAAATGGSPSP. Residues 561-576 show a composition bias toward pro residues; it reads ASPPLPLPLARPPSTP.

The protein belongs to the Antp homeobox family. As to expression, abundant in the eye-antenna imaginal disk.

It is found in the nucleus. Functionally required in R1 and R6 receptor cells and primary pigment cells for normal eye development. This Drosophila ananassae (Fruit fly) protein is Homeobox protein B-H1 (B-H1).